The following is a 116-amino-acid chain: NADH-quinone oxidoreductase subunit A (116 aa).

A run of 3 helical transmembrane segments spans residues 3 to 23 (FTLL…ALGI), 61 to 81 (FAIL…WAVV), and 85 to 105 (LGVY…LGLA).

The protein belongs to the complex I subunit 3 family. NDH-1 is composed of 14 different subunits. Subunits NuoA, H, J, K, L, M, N constitute the membrane sector of the complex.

It is found in the cell inner membrane. The enzyme catalyses a quinone + NADH + 5 H(+)(in) = a quinol + NAD(+) + 4 H(+)(out). Functionally, NDH-1 shuttles electrons from NADH, via FMN and iron-sulfur (Fe-S) centers, to quinones in the respiratory chain. The immediate electron acceptor for the enzyme in this species is believed to be a menaquinone. Couples the redox reaction to proton translocation (for every two electrons transferred, four hydrogen ions are translocated across the cytoplasmic membrane), and thus conserves the redox energy in a proton gradient. The polypeptide is NADH-quinone oxidoreductase subunit A (Phocaeicola vulgatus (strain ATCC 8482 / DSM 1447 / JCM 5826 / CCUG 4940 / NBRC 14291 / NCTC 11154) (Bacteroides vulgatus)).